Reading from the N-terminus, the 484-residue chain is FAD-dependent monooxygenase aurC (484 aa).

The first 21 residues, 1–21, serve as a signal peptide directing secretion; it reads MGAYSFRVIIVGGSITGMTLA. FAD is bound by residues E35, G49, and R108. Residue Y216 is part of the active site. FAD-binding residues include D308 and G321. The chain crosses the membrane as a helical span at residues 451–471; the sequence is FAVASLIVLIVVLARALDSPA.

It belongs to the paxM FAD-dependent monooxygenase family. It depends on FAD as a cofactor.

It is found in the membrane. It participates in polyketide biosynthesis. FAD-dependent monooxygenase; part of the gene cluster that mediates the biosynthesis of aurovertins, fungal polyketides that exhibit potent inhibition of adenosine triphosphate synthase. Tha biosynthesis starts with the HR-PKS aurA that selects propionate as the starter unit; synthesizes a hexa-ene chain through the repeated functions of the KR and DH domains in the first six iterations; selectively introduces three alpha-methyl substitutions at C4, C6, and C16 using the S-adensylmethionine-dependent cMET; and shuts off KR and DH in the last three iterations to afford a 1,3,5-triketo portion that can undergo intramolecular cyclization to yield the alpha-pyrone intermediate. AurE may act as a cyclase and enhances the rate of pyrone formation and product release of aurA. The methyltransferase aurB then methylates the C17 hydroxyl group. C17 methylation is required to initiate epoxidation by the downstream monooxygenase aurC. The monooxygenase aurC and the epoxide hydrolase aurD can iteratively transform the terminal triene portion of the methylated precursor into the dioxabicyclo[3.2.1]octane scaffold of aurovertin E. Epoxidation modifications of the precursor occur in two separate steps; bis-epoxidation of the two terminal olefins takes place first, followed by another epoxidation that occurs at C7-C8 after tetrahydrofuran formation. The O-acyltransferase aurG converts aurovertin E to aurovertin A. The polypeptide is FAD-dependent monooxygenase aurC (Calcarisporium arbuscula (Dendryphion arbuscula)).